We begin with the raw amino-acid sequence, 590 residues long: Aspartate--tRNA(Asp/Asn) ligase (590 aa).

Glutamate 169 contributes to the L-aspartate binding site. The aspartate stretch occupies residues 193–196; the sequence is QLFK. Arginine 215 serves as a coordination point for L-aspartate. ATP is bound by residues 215–217 and glutamine 224; that span reads RDE. Histidine 447 contributes to the L-aspartate binding site. Glutamate 479 is an ATP binding site. Arginine 486 provides a ligand contact to L-aspartate. 531–534 provides a ligand contact to ATP; it reads GWDR. Residues 556–590 form a disordered region; the sequence is GGFDPLTAAPAPITPEQRKEAGVDARPQQDLPPQS.

Belongs to the class-II aminoacyl-tRNA synthetase family. Type 1 subfamily. As to quaternary structure, homodimer.

Its subcellular location is the cytoplasm. It carries out the reaction tRNA(Asx) + L-aspartate + ATP = L-aspartyl-tRNA(Asx) + AMP + diphosphate. Functionally, aspartyl-tRNA synthetase with relaxed tRNA specificity since it is able to aspartylate not only its cognate tRNA(Asp) but also tRNA(Asn). Reaction proceeds in two steps: L-aspartate is first activated by ATP to form Asp-AMP and then transferred to the acceptor end of tRNA(Asp/Asn). The polypeptide is Aspartate--tRNA(Asp/Asn) ligase (Nocardioides sp. (strain ATCC BAA-499 / JS614)).